Here is a 928-residue protein sequence, read N- to C-terminus: 2-oxoglutarate dehydrogenase E1 component (928 aa).

Belongs to the alpha-ketoglutarate dehydrogenase family. Homodimer. Part of the 2-oxoglutarate dehydrogenase (OGDH) complex composed of E1 (2-oxoglutarate dehydrogenase), E2 (dihydrolipoamide succinyltransferase) and E3 (dihydrolipoamide dehydrogenase); the complex contains multiple copies of the three enzymatic components (E1, E2 and E3). Thiamine diphosphate serves as cofactor.

It catalyses the reaction N(6)-[(R)-lipoyl]-L-lysyl-[protein] + 2-oxoglutarate + H(+) = N(6)-[(R)-S(8)-succinyldihydrolipoyl]-L-lysyl-[protein] + CO2. Functionally, E1 component of the 2-oxoglutarate dehydrogenase (OGDH) complex which catalyzes the decarboxylation of 2-oxoglutarate, the first step in the conversion of 2-oxoglutarate to succinyl-CoA and CO(2). The protein is 2-oxoglutarate dehydrogenase E1 component (sucA) of Rickettsia conorii (strain ATCC VR-613 / Malish 7).